Consider the following 222-residue polypeptide: UPF0758 protein YE0063 (222 aa).

One can recognise an MPN domain in the interval 100–222 (VLQNPEITQK…CVSFAERGWL (123 aa)). His-171, His-173, and Asp-184 together coordinate Zn(2+). Positions 171–184 (HNHPSGKAEPSQAD) match the JAMM motif motif.

Belongs to the UPF0758 family. YicR subfamily.

The polypeptide is UPF0758 protein YE0063 (Yersinia enterocolitica serotype O:8 / biotype 1B (strain NCTC 13174 / 8081)).